The sequence spans 365 residues: c-di-GMP synthase (365 aa).

The protein belongs to the CD-NTase family. E subfamily.

It carries out the reaction 2 GTP = 3',3'-c-di-GMP + 2 diphosphate. Functionally, cyclic nucleotide synthase (second messenger synthase) of a CBASS antivirus system. CBASS (cyclic oligonucleotide-based antiphage signaling system) provides immunity against bacteriophage. The CD-NTase protein synthesizes cyclic nucleotides in response to infection; these serve as specific second messenger signals. The signals activate a diverse range of effectors, leading to bacterial cell death and thus abortive phage infection. A type I-D(GG) CBASS system. In terms of biological role, cyclic dinucleotide synthase that catalyzes the synthesis of c-di-GMP, has no activity with other NTP substrates. This chain is c-di-GMP synthase, found in Flavobacteriaceae sp. genome_bin_11.